Here is a 520-residue protein sequence, read N- to C-terminus: Probable kinase 098L (520 aa).

The Protein kinase domain occupies leucine 82–valine 393. Residues phenylalanine 88–isoleucine 96 and lysine 111 each bind ATP. Catalysis depends on aspartate 205, which acts as the Proton acceptor. Positions glutamine 416–lysine 442 form a coiled coil.

Belongs to the protein kinase superfamily.

Functionally, probable kinase. The chain is Probable kinase 098L from Aedes vexans (Inland floodwater mosquito).